The following is a 218-amino-acid chain: MGVQCNSKLLLLAVLITIILSSILVQAIPHKQKTSYQQLLLQSEHVQIPITVAEGDTICFNVSDNPCNFSSYWNHNNCELCGWTPFYSEYAGYSENKSCHPRFTCLHDTKGLKLHNVTTNDSGIYTRNVYYCDIPCNISDDHKHNVEDFDNCNTTINRTHYIITVSSSRYSKRTNSHVATHVGWTATVVIIICVLTYVNVTTTLKHRLRTRNNVNHTM.

A signal peptide spans 1-27; sequence MGVQCNSKLLLLAVLITIILSSILVQA. Residues 178 to 198 traverse the membrane as a helical segment; that stretch reads VATHVGWTATVVIIICVLTYV.

This sequence belongs to the RL11 family.

Its subcellular location is the virion membrane. The chain is Glycoprotein UL1 (UL1) from Homo sapiens (Human).